The following is a 331-amino-acid chain: MKAYAVPFEKYVNLADARLGTRAISVTDDWFADVNRLFQPTPAVWKEGVFDDNGKWMDGWESRRKRFEGYDHAVIRLGVPGWIKGVDIDTSFFTGNYPPSASLEACFVADGDPSDATVWTEILPAVELKGNSHHYHEIAFDKPVSHLRFNIYPDGGVARLRVHGIPYRDWSSVGHNEQVDLAAALNGGRALACSDEHFGRMSNILNPNRGENMGDGWETARRRTPGNDWVIVALGHPGEIERVVVDTLHFKGNYPDSCSIQAAYVKGGTDSQIETQSLFWRELLPSQKLSMHAEHEFAGQIAKLGPVTHVRLNIFPDGGVSRLRLFGKVVK.

It belongs to the allantoicase family.

The enzyme catalyses allantoate + H2O = (S)-ureidoglycolate + urea. It participates in nitrogen metabolism; (S)-allantoin degradation; (S)-ureidoglycolate from allantoate (aminidohydrolase route): step 1/1. In Stutzerimonas stutzeri (strain A1501) (Pseudomonas stutzeri), this protein is Probable allantoicase.